A 167-amino-acid polypeptide reads, in one-letter code: Novel acetylcholine receptor chaperone (167 aa).

The Cytoplasmic segment spans residues 1–5 (MASPR). The helical transmembrane segment at 6-26 (TVTIVALSVALGLFFVFMGTI) threads the bilayer. Residues 27 to 61 (KLTPRLSKDAYSEMKRAYKSYVRALPLLKKMGINS) lie on the Lumenal side of the membrane. The segment at 43-54 (AYKSYVRALPLL) is interaction with NGFR. The chain crosses the membrane as a helical span at residues 62-82 (ILLRKSIGALEVACGIVMTLV). Residues 83–88 (PGRPKD) lie on the Cytoplasmic side of the membrane. The helical transmembrane segment at 89-109 (VANFFLLLLVLAVLFFHQLVG) threads the bilayer. Residues 110–114 (DPLKR) are Lumenal-facing. The chain crosses the membrane as a helical span at residues 115–132 (YAHALVFGILLTCRLLIA). At 133-167 (RKPEDRSSEKKPLPGNAEEQPSLYEKAPQGKVKVS) the chain is on the cytoplasmic side. Residues 136-167 (EDRSSEKKPLPGNAEEQPSLYEKAPQGKVKVS) are disordered.

It belongs to the DoxX family. As to quaternary structure, may interact with NGFR. Interacts with RPN1, RPN2 and CANX.

The protein resides in the peroxisome membrane. The protein localises to the cytoplasmic vesicle. Its subcellular location is the endoplasmic reticulum membrane. In terms of biological role, molecular chaperone which mediates the proper assembly and functional expression of the nicotinic acetylcholine receptors (nAChRs) throughout the brain. Essential for the proper folding, assembly, function and surface trafficking of alpha-7 (CHRNA7), alpha-4-beta-2, alpha-3-beta-2 and alpha-3-beta-4 receptors. Stably associates with ribophorin-1 (RPN1) and ribophorin-2 (RPN2) (components of the oligosaccharyl transferase (OST) complex) and with calnexin (CANX), both of which are critical for NACHO-mediated effects on CHRNA7 assembly and function. Facilitates the proper folding and assembly of alpha-6-beta-2 and alpha-6-beta-2-beta-3 receptors and acts at early stages of the nAChRs subunit assembly. Promotes the expression of the alpha-4(2):beta-2(3) stoichiometric form over the alpha-4(3):beta-2(2) form. The polypeptide is Novel acetylcholine receptor chaperone (TMEM35A) (Macaca fascicularis (Crab-eating macaque)).